We begin with the raw amino-acid sequence, 298 residues long: GTP cyclohydrolase FolE2 (298 aa).

It belongs to the GTP cyclohydrolase IV family.

It carries out the reaction GTP + H2O = 7,8-dihydroneopterin 3'-triphosphate + formate + H(+). Its pathway is cofactor biosynthesis; 7,8-dihydroneopterin triphosphate biosynthesis; 7,8-dihydroneopterin triphosphate from GTP: step 1/1. Functionally, converts GTP to 7,8-dihydroneopterin triphosphate. The protein is GTP cyclohydrolase FolE2 of Pseudomonas fluorescens (strain Pf0-1).